Here is a 223-residue protein sequence, read N- to C-terminus: Ion-translocating oxidoreductase complex subunit E (223 aa).

6 consecutive transmembrane segments (helical) span residues 17-37, 40-60, 70-90, 94-114, 129-149, and 182-202; these read NGVL…GTAT, LGMG…VAMF, IPVY…GMNA, ELYK…LPLA, FLDG…IGAV, and WGIL…LMVV.

This sequence belongs to the NqrDE/RnfAE family. As to quaternary structure, the complex is composed of six subunits: RnfA, RnfB, RnfC, RnfD, RnfE and RnfG.

It localises to the cell inner membrane. Its function is as follows. Part of a membrane-bound complex that couples electron transfer with translocation of ions across the membrane. This chain is Ion-translocating oxidoreductase complex subunit E, found in Paramagnetospirillum magneticum (strain ATCC 700264 / AMB-1) (Magnetospirillum magneticum).